Reading from the N-terminus, the 217-residue chain is MNATTAPLPYSTTRLHELAHLLIANIRELAHAGWTPATSSNFSHRLDEQHAAITVSGRDKGRLVEENIMVVDFDGLAVGRPLRPSAETLLHTQLYRRFPEIGCVLHTHSPVQTIASRLYAGSGVIRLEGYELLKAFDGNTTHETAVEVPVFANTQDMQVLAAQVDALLDKQSMWGYLIEGHGLYAWGRNMAEARRHLEAFEFLLHCELELLKLRGTR.

The Zn(2+) site is built by His106 and His108.

Belongs to the aldolase class II family. MtnB subfamily. Requires Zn(2+) as cofactor.

The catalysed reaction is 5-(methylsulfanyl)-D-ribulose 1-phosphate = 5-methylsulfanyl-2,3-dioxopentyl phosphate + H2O. It participates in amino-acid biosynthesis; L-methionine biosynthesis via salvage pathway; L-methionine from S-methyl-5-thio-alpha-D-ribose 1-phosphate: step 2/6. In terms of biological role, catalyzes the dehydration of methylthioribulose-1-phosphate (MTRu-1-P) into 2,3-diketo-5-methylthiopentyl-1-phosphate (DK-MTP-1-P). The sequence is that of Methylthioribulose-1-phosphate dehydratase from Xanthomonas euvesicatoria pv. vesicatoria (strain 85-10) (Xanthomonas campestris pv. vesicatoria).